A 118-amino-acid polypeptide reads, in one-letter code: V-type proton ATPase subunit G 1 (118 aa).

Position 2 is an N-acetylalanine (Ala2). Residues 55 to 90 (FQSKQQAAMGSQGNLSAEVEQATRRQVQGMQSSQQR) are disordered. Polar residues-rich tracts occupy residues 56 to 69 (QSKQ…QGNL) and 78 to 89 (RRQVQGMQSSQQ).

It belongs to the V-ATPase G subunit family. In terms of assembly, V-ATPase is a heteromultimeric enzyme made up of two complexes: the ATP-hydrolytic V1 complex and the proton translocation V0 complex. The V1 complex consists of three catalytic AB heterodimers that form a heterohexamer, three peripheral stalks each consisting of EG heterodimers, one central rotor including subunits D and F, and the regulatory subunits C and H. The proton translocation complex V0 consists of the proton transport subunit a, a ring of proteolipid subunits c9c'', rotary subunit d, subunits e and f, and the accessory subunits ATP6AP1/Ac45 and ATP6AP2/PRR.

The protein localises to the apical cell membrane. Functionally, subunit of the V1 complex of vacuolar(H+)-ATPase (V-ATPase), a multisubunit enzyme composed of a peripheral complex (V1) that hydrolyzes ATP and a membrane integral complex (V0) that translocates protons. V-ATPase is responsible for acidifying and maintaining the pH of intracellular compartments and in some cell types, is targeted to the plasma membrane, where it is responsible for acidifying the extracellular environment. In aerobic conditions, involved in intracellular iron homeostasis, thus triggering the activity of Fe(2+) prolyl hydroxylase (PHD) enzymes, and leading to HIF1A hydroxylation and subsequent proteasomal degradation. This Canis lupus familiaris (Dog) protein is V-type proton ATPase subunit G 1 (ATP6V1G1).